The chain runs to 403 residues: S-adenosylmethionine:tRNA ribosyltransferase-isomerase (403 aa).

This sequence belongs to the QueA family. In terms of assembly, monomer.

It is found in the cytoplasm. The enzyme catalyses 7-aminomethyl-7-carbaguanosine(34) in tRNA + S-adenosyl-L-methionine = epoxyqueuosine(34) in tRNA + adenine + L-methionine + 2 H(+). Its pathway is tRNA modification; tRNA-queuosine biosynthesis. Transfers and isomerizes the ribose moiety from AdoMet to the 7-aminomethyl group of 7-deazaguanine (preQ1-tRNA) to give epoxyqueuosine (oQ-tRNA). The sequence is that of S-adenosylmethionine:tRNA ribosyltransferase-isomerase from Psychrobacter arcticus (strain DSM 17307 / VKM B-2377 / 273-4).